Consider the following 451-residue polypeptide: MARKYFGTDGVRGRVGELPITPEFVMRLGYAAGVTLVAREHLPAGERPAILIGKDTRVSGYMLEAALQAGFAAAGVDVLLAGPIPTPAVAYLTRALRLQAGVVISASHNPFYDNGIKFFSAGGAKLPDAVEAEIEERIGQPMGCAESARLGRARRIGDAAGRYIEFCKSSFPNELDLRGLRIALDCAHGAAYHIAPNVFHELGAEVISVGVDPNGLNINDGVGATRPENLRQAVLSHGADLGIALDGDGDRLIMVDRQGEIYDGDKLLYVIASARAAEGRLDGVVGTLMSNLGFEHALERRGVAFARAKVGDRYVLEMLHERGWKIGGENSGHIICLDCHTTGDGIISALQVLAALKHREMSLSEACKDLVFYPQRLINVRLPAGFDWKADARIAQTAADAERTLGDTGRVLLRPSGTEPLLRVMVEGRDEQLVESLARGIAGAVELAVAG.

The Phosphoserine intermediate role is filled by S107. S107, D246, D248, and D250 together coordinate Mg(2+). S107 is modified (phosphoserine).

It belongs to the phosphohexose mutase family. Mg(2+) is required as a cofactor. Post-translationally, activated by phosphorylation.

The enzyme catalyses alpha-D-glucosamine 1-phosphate = D-glucosamine 6-phosphate. In terms of biological role, catalyzes the conversion of glucosamine-6-phosphate to glucosamine-1-phosphate. In Azoarcus sp. (strain BH72), this protein is Phosphoglucosamine mutase.